We begin with the raw amino-acid sequence, 89 residues long: Small ribosomal subunit protein uS15 (89 aa).

This sequence belongs to the universal ribosomal protein uS15 family. Part of the 30S ribosomal subunit. Forms a bridge to the 50S subunit in the 70S ribosome, contacting the 23S rRNA.

Its function is as follows. One of the primary rRNA binding proteins, it binds directly to 16S rRNA where it helps nucleate assembly of the platform of the 30S subunit by binding and bridging several RNA helices of the 16S rRNA. In terms of biological role, forms an intersubunit bridge (bridge B4) with the 23S rRNA of the 50S subunit in the ribosome. This chain is Small ribosomal subunit protein uS15, found in Streptococcus mutans serotype c (strain ATCC 700610 / UA159).